A 254-amino-acid polypeptide reads, in one-letter code: Probable triosephosphate isomerase 2 (254 aa).

9–11 (NMK) is a substrate binding site. H96 serves as the catalytic Electrophile. The active-site Proton acceptor is E168. Residues G174 and S212 each contribute to the substrate site.

The protein belongs to the triosephosphate isomerase family. Homodimer.

The protein resides in the cytoplasm. It carries out the reaction D-glyceraldehyde 3-phosphate = dihydroxyacetone phosphate. Its pathway is carbohydrate biosynthesis; gluconeogenesis. It participates in carbohydrate degradation; glycolysis; D-glyceraldehyde 3-phosphate from glycerone phosphate: step 1/1. Its function is as follows. Involved in the gluconeogenesis. Catalyzes stereospecifically the conversion of dihydroxyacetone phosphate (DHAP) to D-glyceraldehyde-3-phosphate (G3P). This chain is Probable triosephosphate isomerase 2, found in Listeria monocytogenes serotype 4b (strain F2365).